The primary structure comprises 325 residues: MIDFANFYQLIAKNRLSHWLHTLPAQLHAWQHDNLHGDLPRWNRALNKLPTTAPGHIELQRGVEIGNSQSLSEGERKKVESLLRQFMPWRKGPFTVHGIHIDTEWRSDWKWDRVLPHISPLAGRYVLDVGCGSGYHLWRMVGEGAKLAVGIDPSPLFLCQFEAIRHFTGGDQRAHLLPLGIQELPDLRAFDTVFSMGVLYHRKSPIEHIEQLRNQLKDDGELVLETLVVDGGVNEVLVPTDRYGKMRNVWFIPSSAALKLWVERCGFTDVRIVDENMTSTDEQRRTDWMINESLSDYLDPADPALTVEGHPAPKRAVLIARKAKD.

Carboxy-S-adenosyl-L-methionine contacts are provided by residues Lys-91, Trp-105, Lys-110, Gly-130, 152–154 (DPS), Met-196, Tyr-200, and Arg-315.

It belongs to the class I-like SAM-binding methyltransferase superfamily. CmoB family. Homotetramer.

It catalyses the reaction carboxy-S-adenosyl-L-methionine + 5-hydroxyuridine(34) in tRNA = 5-carboxymethoxyuridine(34) in tRNA + S-adenosyl-L-homocysteine + H(+). Its function is as follows. Catalyzes carboxymethyl transfer from carboxy-S-adenosyl-L-methionine (Cx-SAM) to 5-hydroxyuridine (ho5U) to form 5-carboxymethoxyuridine (cmo5U) at position 34 in tRNAs. This Aeromonas salmonicida (strain A449) protein is tRNA U34 carboxymethyltransferase.